A 176-amino-acid chain; its full sequence is RNA pyrophosphohydrolase (176 aa).

One can recognise a Nudix hydrolase domain in the interval 6 to 149 (GYRPNVGIVI…KRDVYRRVMK (144 aa)). The Nudix box motif lies at 38–59 (GGINPGESAEQAMYRELFEEVG).

This sequence belongs to the Nudix hydrolase family. RppH subfamily. It depends on a divalent metal cation as a cofactor.

Its function is as follows. Accelerates the degradation of transcripts by removing pyrophosphate from the 5'-end of triphosphorylated RNA, leading to a more labile monophosphorylated state that can stimulate subsequent ribonuclease cleavage. This Salmonella arizonae (strain ATCC BAA-731 / CDC346-86 / RSK2980) protein is RNA pyrophosphohydrolase.